We begin with the raw amino-acid sequence, 213 residues long: Pyrrolidone-carboxylate peptidase (213 aa).

Active-site residues include Glu78, Cys141, and His165.

The protein belongs to the peptidase C15 family. As to quaternary structure, homotetramer.

It localises to the cytoplasm. It catalyses the reaction Release of an N-terminal pyroglutamyl group from a polypeptide, the second amino acid generally not being Pro.. Functionally, removes 5-oxoproline from various penultimate amino acid residues except L-proline. The sequence is that of Pyrrolidone-carboxylate peptidase from Alkaliphilus oremlandii (strain OhILAs) (Clostridium oremlandii (strain OhILAs)).